Here is a 195-residue protein sequence, read N- to C-terminus: Dephospho-CoA kinase (195 aa).

Positions 3 to 195 constitute a DPCK domain; it reads KIGLTGGIGS…ANMKNVIAEI (193 aa). ATP is bound at residue 11-16; it reads GSGKST.

The protein belongs to the CoaE family.

Its subcellular location is the cytoplasm. The enzyme catalyses 3'-dephospho-CoA + ATP = ADP + CoA + H(+). The protein operates within cofactor biosynthesis; coenzyme A biosynthesis; CoA from (R)-pantothenate: step 5/5. Functionally, catalyzes the phosphorylation of the 3'-hydroxyl group of dephosphocoenzyme A to form coenzyme A. The protein is Dephospho-CoA kinase of Corynebacterium glutamicum (Brevibacterium saccharolyticum).